We begin with the raw amino-acid sequence, 193 residues long: ATP synthase subunit b 1 (193 aa).

Positions 13-32 (PAVTGGDTHSGTGVPAEAHG) are disordered. Residues 40–60 (ATFPSQLLWLAITFGLFYLFL) form a helical membrane-spanning segment.

The protein belongs to the ATPase B chain family. In terms of assembly, F-type ATPases have 2 components, F(1) - the catalytic core - and F(0) - the membrane proton channel. F(1) has five subunits: alpha(3), beta(3), gamma(1), delta(1), epsilon(1). F(0) has three main subunits: a(1), b(2) and c(10-14). The alpha and beta chains form an alternating ring which encloses part of the gamma chain. F(1) is attached to F(0) by a central stalk formed by the gamma and epsilon chains, while a peripheral stalk is formed by the delta and b chains.

It is found in the cell inner membrane. Functionally, f(1)F(0) ATP synthase produces ATP from ADP in the presence of a proton or sodium gradient. F-type ATPases consist of two structural domains, F(1) containing the extramembraneous catalytic core and F(0) containing the membrane proton channel, linked together by a central stalk and a peripheral stalk. During catalysis, ATP synthesis in the catalytic domain of F(1) is coupled via a rotary mechanism of the central stalk subunits to proton translocation. In terms of biological role, component of the F(0) channel, it forms part of the peripheral stalk, linking F(1) to F(0). The polypeptide is ATP synthase subunit b 1 (Mesorhizobium japonicum (strain LMG 29417 / CECT 9101 / MAFF 303099) (Mesorhizobium loti (strain MAFF 303099))).